The sequence spans 559 residues: Putative helicase 22 (559 aa).

The 162-residue stretch at 186–347 folds into the Helicase ATP-binding domain; the sequence is VSDVNVIGNG…EIMGLLGKIS (162 aa). 199–206 serves as a coordination point for ATP; the sequence is APTGSGKS. A DEAH box motif is present at residues 300–303; the sequence is DEAH. A Helicase C-terminal domain is found at 410-552; sequence TNKQIISKIK…KMNFIENEYN (143 aa).

This Sulfolobus islandicus filamentous virus (isolate Iceland/Hveragerdi) (SIFV) protein is Putative helicase 22 (SIFV0022).